The primary structure comprises 209 residues: Imidazole glycerol phosphate synthase subunit HisH (209 aa).

Residues 1–205 (MIAIIDYGMG…QGVVEAWKSS (205 aa)) enclose the Glutamine amidotransferase type-1 domain. Cys79 functions as the Nucleophile in the catalytic mechanism. Residues His180 and Glu182 contribute to the active site.

Heterodimer of HisH and HisF.

It is found in the cytoplasm. The catalysed reaction is 5-[(5-phospho-1-deoxy-D-ribulos-1-ylimino)methylamino]-1-(5-phospho-beta-D-ribosyl)imidazole-4-carboxamide + L-glutamine = D-erythro-1-(imidazol-4-yl)glycerol 3-phosphate + 5-amino-1-(5-phospho-beta-D-ribosyl)imidazole-4-carboxamide + L-glutamate + H(+). It catalyses the reaction L-glutamine + H2O = L-glutamate + NH4(+). The protein operates within amino-acid biosynthesis; L-histidine biosynthesis; L-histidine from 5-phospho-alpha-D-ribose 1-diphosphate: step 5/9. In terms of biological role, IGPS catalyzes the conversion of PRFAR and glutamine to IGP, AICAR and glutamate. The HisH subunit catalyzes the hydrolysis of glutamine to glutamate and ammonia as part of the synthesis of IGP and AICAR. The resulting ammonia molecule is channeled to the active site of HisF. The sequence is that of Imidazole glycerol phosphate synthase subunit HisH from Bacillus cereus (strain G9842).